A 258-amino-acid polypeptide reads, in one-letter code: Imidazole glycerol phosphate synthase subunit HisF (258 aa).

Catalysis depends on residues D12 and D131.

Belongs to the HisA/HisF family. As to quaternary structure, heterodimer of HisH and HisF.

It is found in the cytoplasm. The enzyme catalyses 5-[(5-phospho-1-deoxy-D-ribulos-1-ylimino)methylamino]-1-(5-phospho-beta-D-ribosyl)imidazole-4-carboxamide + L-glutamine = D-erythro-1-(imidazol-4-yl)glycerol 3-phosphate + 5-amino-1-(5-phospho-beta-D-ribosyl)imidazole-4-carboxamide + L-glutamate + H(+). It functions in the pathway amino-acid biosynthesis; L-histidine biosynthesis; L-histidine from 5-phospho-alpha-D-ribose 1-diphosphate: step 5/9. IGPS catalyzes the conversion of PRFAR and glutamine to IGP, AICAR and glutamate. The HisF subunit catalyzes the cyclization activity that produces IGP and AICAR from PRFAR using the ammonia provided by the HisH subunit. This Pseudarthrobacter chlorophenolicus (strain ATCC 700700 / DSM 12829 / CIP 107037 / JCM 12360 / KCTC 9906 / NCIMB 13794 / A6) (Arthrobacter chlorophenolicus) protein is Imidazole glycerol phosphate synthase subunit HisF.